Consider the following 516-residue polypeptide: D-aminopeptidase (516 aa).

Ser-61 serves as the catalytic Nucleophile. Lys-64 serves as the catalytic Proton donor/acceptor. Residues 476 to 486 (RRSMDAPAPGD) form an important for specificity region. Asp-480 contacts substrate.

The protein belongs to the peptidase S12 family. In terms of assembly, homodimer.

It catalyses the reaction Release of an N-terminal D-amino acid from a peptide, Xaa-|-Yaa-, in which Xaa is preferably D-Ala, D-Ser or D-Thr. D-amino acid amides and methyl esters also are hydrolyzed, as is glycine amide.. Its activity is regulated as follows. Inhibited by beta-lactam compounds such as 6-aminopenicillic acid, 7-aminocephalosporanic acid, benzylpenicillin and ampicillin. Inhibited by p-chloromercuribenzoate. In terms of biological role, hydrolyzes N-terminal residues in D-amino acid-containing peptides. This Cereibacter sphaeroides (strain KD131 / KCTC 12085) (Rhodobacter sphaeroides) protein is D-aminopeptidase.